The primary structure comprises 199 residues: Peroxynitrite isomerase (199 aa).

Positions 20–26 (GVWEGSG) match the GXWXGXG motif. 2 residues coordinate heme b: Lys158 and His190.

The protein belongs to the nitrobindin family. Homodimer. The cofactor is heme b.

The enzyme catalyses peroxynitrite = nitrate. Its pathway is nitrogen metabolism. Heme-binding protein able to scavenge peroxynitrite and to protect free L-tyrosine against peroxynitrite-mediated nitration, by acting as a peroxynitrite isomerase that converts peroxynitrite to nitrate. Therefore, this protein likely plays a role in peroxynitrite sensing and in the detoxification of reactive nitrogen and oxygen species (RNS and ROS, respectively). Is able to bind nitric oxide (NO) in vitro, but may act as a sensor of peroxynitrite levels in vivo. This Clavibacter sepedonicus (Clavibacter michiganensis subsp. sepedonicus) protein is Peroxynitrite isomerase.